A 230-amino-acid chain; its full sequence is TPR repeat-containing protein BB_0298 (230 aa).

TPR repeat units lie at residues 69–102 (ARFF…NPNN) and 183–216 (FEFL…ASTE).

This Borreliella burgdorferi (strain ATCC 35210 / DSM 4680 / CIP 102532 / B31) (Borrelia burgdorferi) protein is TPR repeat-containing protein BB_0298.